The following is a 1495-amino-acid chain: MGFEALNWYCKPVADGFWEKAVDGAFGAYTPCAIDSLVMLVSHFVLLGLCFYRIWIIFHNTKAQIYVLRKKYYNCVLGLLACYCVVEPVLRLVMGISLFDMDEETDFPPFEVASLMVEAFAWFSMLVLIGLETKQYVKEFRWYVRFGVLYVLVADAVLLDLVLPLKNSINRTALYLFISSRCSQALFGILLLIYIPELDPYPGYHIVNNEPLDNVEYDALRGGEHICPERHASIFSRIYFGWITPLMQLGYRKPITEKDVWQLDKWDQTETLIKRFQRCWTEESRRPKPWLLRALNNSLGGRFWLAGIFKIGNDLSQFVGPVILSHLLRSMQEGDPAWVGYVYAFIIFVGVTLGVLCEAQYFQNVWRVGFRLRSTLVAAIFHKSLRLTHEARKNFASGKVTNMITTDANALQQISQQLHGLWSAPFRIIVSMILLYQQLGVASLFGSLILFLLIPLQTLIISKMRKLTKEGLQWTDKRVGITNEILSSMDTVKCYAWEKSFESRIQGIRNEELSWFRKAQLLSAFNSFILNSIPVVVTVVSFGVFVLLGGDLTPARAFTSLSLFAVLRFPLNMLPNLLSQVVNANVSLQRIEELLLSEERILAQNPPLQPGTPAISIKNGYFSWDSKTTKPTLSDINLEIPVGTLVAIVGGTGEGKTSLISAMLGELSHAETTSVVIRGSVAYVPQVSWIFNATVRENILFGSDFESERYWRAIDATALQHDLDLLPGRDLTEIGERGVNISGGQKQRVSMARAVYSNSDVYIFDDPLSALDAHVAHQVFDSCMKDELRGKTRVLVTNQLHFLPLMDKIILVSEGMIKEEGTFVELSKSGILFKKLMENAGKMDATQEVNTNDENILKLGPTVTVDVSERNLGSTKQGKRRRSVLIKQEERETGIISWNVLMRYKEAVGGLWVVMILLACYLATEVLRVSSSTWLSIWTDQSTSKNYSPGFYIVVYALLGFGQVAVTFTNSFWLITSSLHAARRLHDAMLSSILRAPMLFFHTNPTGRVINRFSKDIGDIDRNVANLMNMFMNQLWQLLSTFALIGTVSTISLWAIMPLLILFYAAYLYYQSTSREVRRLDSVTRSPIYAQFGEALNGLSSIRAYKAYDRMAKINGKSMDNNIRFTLANTSSNRWLTIRLETLGGVMIWLTATFAVLQNGNTNNQAGFASTMGLLLSYTLNITSLLSGVLRQASRAENSLNSVERVGNYIDLPSEATDIIENNRPVCGWPSGGSIKFEDVHLRYRPGLPPVLHGLTFFVSPSEKVGVVGRTGAGKSSMLNALFRIVEVEKGRIMIDDCDVAKFGLTDVRRVLSIIPQSPVLFSGTVRFNIDPFSEHNDAGLWEALHRAHIKDVISRNPFGLDAEVCEGGENFSVGQRQLLSLARALLRRSKILVLDEATASVDVRTDSLIQRTIREEFKSCTMLVIAHRLNTIIDCDKILVLSSGQVLEYDSPQELLSRDTSAFFRMVHSTGPANAQYLSNLVFERRENGMSVGG.

The next 11 helical transmembrane spans lie at 38–58 (VMLV…WIIF), 76–96 (VLGL…VMGI), 110–130 (FEVA…VLIG), 146–166 (FGVL…LPLK), 173–195 (ALYL…LIYI), 303–323 (FWLA…GPVI), 337–357 (AWVG…GVLC), 420–440 (GLWS…QQLG), 441–461 (VASL…TLII), 528–548 (FILN…FVLL), and 558–578 (FTSL…PNLL). One can recognise an ABC transmembrane type-1 1 domain in the interval 303–583 (FWLAGIFKIG…LPNLLSQVVN (281 aa)). The ABC transporter 1 domain maps to 615-839 (ISIKNGYFSW…GILFKKLMEN (225 aa)). ATP is bound at residue 650 to 657 (GGTGEGKT). Transmembrane regions (helical) follow at residues 907-927 (AVGG…TEVL), 949-969 (PGFY…VTFT), 1042-1062 (FALI…LLIL), 1140-1160 (LETL…LQNG), and 1166-1186 (AGFA…TSLL). An ABC transmembrane type-1 2 domain is found at 914 to 1198 (VMILLACYLA…VLRQASRAEN (285 aa)). One can recognise an ABC transporter 2 domain in the interval 1235-1469 (IKFEDVHLRY…DTSAFFRMVH (235 aa)). 1269 to 1276 (GRTGAGKS) contributes to the ATP binding site.

This sequence belongs to the ABC transporter superfamily. ABCC family. Conjugate transporter (TC 3.A.1.208) subfamily. In terms of tissue distribution, ubiquitous.

The protein resides in the membrane. The catalysed reaction is ATP + H2O + xenobioticSide 1 = ADP + phosphate + xenobioticSide 2.. Pump for glutathione S-conjugates. The chain is ABC transporter C family member 12 (ABCC12) from Arabidopsis thaliana (Mouse-ear cress).